Here is a 156-residue protein sequence, read N- to C-terminus: Enhancer of split M1 protein (156 aa).

An N-terminal signal peptide occupies residues 1–19 (MMSQTLTLCCLALVACVYG). Kazal-like domains lie at 23–81 (STND…AWCS) and 96–156 (KLEV…EEKC). Cystine bridges form between Cys-29–Cys-62, Cys-33–Cys-55, Cys-102–Cys-135, Cys-106–Cys-128, and Cys-114–Cys-156.

The sequence is that of Enhancer of split M1 protein (Kaz-m1) from Drosophila melanogaster (Fruit fly).